Reading from the N-terminus, the 307-residue chain is D-alanine--D-alanine ligase (307 aa).

The ATP-grasp domain occupies 108–301; it reads KEVFAAAGLP…FPEFCAWMVE (194 aa). Residue 135–185 participates in ATP binding; sequence LPPPYVVKPNCEGSSVGVYIVQADANGPPRLAPDMPRDLMVETYIPGRELT. D252, E268, and N270 together coordinate Mg(2+).

It belongs to the D-alanine--D-alanine ligase family. It depends on Mg(2+) as a cofactor. The cofactor is Mn(2+).

The protein localises to the cytoplasm. It catalyses the reaction 2 D-alanine + ATP = D-alanyl-D-alanine + ADP + phosphate + H(+). The protein operates within cell wall biogenesis; peptidoglycan biosynthesis. Cell wall formation. In Cereibacter sphaeroides (strain ATCC 17025 / ATH 2.4.3) (Rhodobacter sphaeroides), this protein is D-alanine--D-alanine ligase.